Consider the following 4158-residue polypeptide: Dynein axonemal heavy chain 6 (4158 aa).

A stem region spans residues 1-1433; it reads MTFRATDSEF…VARMALSQYT (1433 aa). 192 to 199 contributes to the ATP binding site; that stretch reads IIRENEHL. The stretch at 805–859 forms a coiled coil; that stretch reads CVHLGSDLEELNNEVNEVKLQAQDPQILDISADQDKIRLILNNLQSVLADLQKRA. AAA stretches follow at residues 1434 to 1655, 1715 to 1948, 2058 to 2306, and 2408 to 2659; these read YGYE…VLVM, STIV…KKCS, KYNR…CVQG, and DYNL…LRRR. ATP is bound by residues 1472 to 1479, 1753 to 1760, 2096 to 2103, and 2447 to 2454; these read GPAGTGKT, GPTGGGKT, GITGVGKS, and GVGGTGKQ. The segment at 2676–2961 is stalk; it reads SMLSEKRKQI…KTMALTKARL (286 aa). The stretch at 2901 to 2996 forms a coiled coil; sequence KRQKLRAAQA…EEISNITGNV (96 aa). AAA regions lie at residues 3042 to 3272 and 3509 to 3730; these read LGDP…AIKT and LTDF…NLKL.

Belongs to the dynein heavy chain family. The dynein complex consists of at least two heavy chains and a number of intermediate and light chains. Expressed in several tissues, including brain, pituitary, testis and trachea, with highest levels in testis.

The protein localises to the cytoplasm. It is found in the cytoskeleton. The protein resides in the cilium axoneme. Force generating protein of respiratory cilia. Produces force towards the minus ends of microtubules. Dynein has ATPase activity; the force-producing power stroke is thought to occur on release of ADP. This Homo sapiens (Human) protein is Dynein axonemal heavy chain 6.